Here is a 95-residue protein sequence, read N- to C-terminus: Parvalbumin beta 3 (95 aa).

N-acetylalanine is present on Ala1. EF-hand domains are found at residues 39 to 66 (FFAIIDQDHSGFIEEDELKLFLQTFSAG) and 77 to 95 (DVDGDGMIGVDEFVALVKA). Residues Asp44, Asp46, Ser48, Phe50, Glu52, Glu55, Asp77, Asp79, Asp81, Met83, and Glu88 each coordinate Ca(2+).

This sequence belongs to the parvalbumin family.

In terms of biological role, in muscle, parvalbumin is thought to be involved in relaxation after contraction. It binds two calcium ions. The protein is Parvalbumin beta 3 of Merluccius paradoxus (Deep-water Cape hake).